The sequence spans 331 residues: MSLFDPHLDGASLGKVAVLMGGVSAEREVSLLSGAGVLRALRARAVDAHAFDTAQGDLGALKREGYARCFIALHGRHGEDGTVQGALELLGIAYTGSGVMASSMALDKTMSKRIWRSEGLPTPDWRLVTSGAEAGQALQTLGAPMIVKPAREGSTIGLSKVHQAQQCASAYLLAARYDPEVLCEQFIAGDELTCTVLDQGRRASAQALPLIRIVAPDGNYDYQHKYFSDATRYHCPSGLPEAQERAIGRLAEQAFSALGCRGWARADIMLRASDQQPFLLEINTAPGMTDHSLVPMSARAAGISYEDLCLRLLAMATLDTPPGALSGAARA.

One can recognise an ATP-grasp domain in the interval 112-314 (KRIWRSEGLP…YEDLCLRLLA (203 aa)). 138–193 (LQTLGAPMIVKPAREGSTIGLSKVHQAQQCASAYLLAARYDPEVLCEQFIAGDELT) is an ATP binding site. Mg(2+) contacts are provided by aspartate 267, glutamate 281, and asparagine 283.

Belongs to the D-alanine--D-alanine ligase family. Requires Mg(2+) as cofactor. The cofactor is Mn(2+).

It is found in the cytoplasm. It catalyses the reaction 2 D-alanine + ATP = D-alanyl-D-alanine + ADP + phosphate + H(+). It participates in cell wall biogenesis; peptidoglycan biosynthesis. Cell wall formation. This chain is D-alanine--D-alanine ligase, found in Verminephrobacter eiseniae (strain EF01-2).